A 456-amino-acid chain; its full sequence is Enolase (456 aa).

Gln-164 contacts (2R)-2-phosphoglycerate. Glu-207 acts as the Proton donor in catalysis. Mg(2+) contacts are provided by Asp-244, Glu-287, and Asp-314. Residues Lys-339, Arg-368, Ser-369, and Lys-390 each coordinate (2R)-2-phosphoglycerate. Residue Lys-339 is the Proton acceptor of the active site.

This sequence belongs to the enolase family. As to quaternary structure, component of the RNA degradosome, a multiprotein complex involved in RNA processing and mRNA degradation. Mg(2+) serves as cofactor.

Its subcellular location is the cytoplasm. The protein resides in the secreted. The protein localises to the cell surface. The catalysed reaction is (2R)-2-phosphoglycerate = phosphoenolpyruvate + H2O. It functions in the pathway carbohydrate degradation; glycolysis; pyruvate from D-glyceraldehyde 3-phosphate: step 4/5. Catalyzes the reversible conversion of 2-phosphoglycerate (2-PG) into phosphoenolpyruvate (PEP). It is essential for the degradation of carbohydrates via glycolysis. In Francisella tularensis subsp. novicida (strain U112), this protein is Enolase.